The sequence spans 442 residues: Glutamyl-tRNA(Gln) amidotransferase subunit A (442 aa).

Catalysis depends on charge relay system residues Lys-50 and Ser-125. The Acyl-ester intermediate role is filled by Ser-149.

Belongs to the amidase family. GatA subfamily. As to quaternary structure, heterotrimer of A, B and C subunits.

It catalyses the reaction L-glutamyl-tRNA(Gln) + L-glutamine + ATP + H2O = L-glutaminyl-tRNA(Gln) + L-glutamate + ADP + phosphate + H(+). Allows the formation of correctly charged Gln-tRNA(Gln) through the transamidation of misacylated Glu-tRNA(Gln) in organisms which lack glutaminyl-tRNA synthetase. The reaction takes place in the presence of glutamine and ATP through an activated gamma-phospho-Glu-tRNA(Gln). This is Glutamyl-tRNA(Gln) amidotransferase subunit A from Nitratiruptor sp. (strain SB155-2).